We begin with the raw amino-acid sequence, 207 residues long: Small ribosomal subunit protein uS4 (207 aa).

The interval 31–55 (KCKLDSKPGQHGRTSGARTSDYGTQ) is disordered. Polar residues predominate over residues 42-53 (GRTSGARTSDYG). Positions 97 to 160 (SRLDNVVYRM…KKQARIIEAL (64 aa)) constitute an S4 RNA-binding domain.

The protein belongs to the universal ribosomal protein uS4 family. As to quaternary structure, part of the 30S ribosomal subunit. Contacts protein S5. The interaction surface between S4 and S5 is involved in control of translational fidelity.

Functionally, one of the primary rRNA binding proteins, it binds directly to 16S rRNA where it nucleates assembly of the body of the 30S subunit. In terms of biological role, with S5 and S12 plays an important role in translational accuracy. This Burkholderia vietnamiensis (strain G4 / LMG 22486) (Burkholderia cepacia (strain R1808)) protein is Small ribosomal subunit protein uS4.